A 223-amino-acid polypeptide reads, in one-letter code: N-acetylmuramate alpha-1-phosphate uridylyltransferase (223 aa).

Residues 11–13 and K23 contribute to the UTP site; that span reads GER. N105 lines the substrate pocket. D107 contributes to the Mg(2+) binding site. Substrate contacts are provided by D140 and D205. D205 lines the Mg(2+) pocket.

Belongs to the nucleotidyltransferase MurU family. As to quaternary structure, monomer. Mg(2+) is required as a cofactor.

The enzyme catalyses N-acetyl-alpha-D-muramate 1-phosphate + UDP + H(+) = UDP-N-acetyl-alpha-D-muramate + phosphate. It participates in cell wall biogenesis; peptidoglycan recycling. Its activity is regulated as follows. Is completely inhibited by EDTA in vitro. Functionally, catalyzes the formation of UDP-N-acetylmuramate (UDP-MurNAc), a crucial precursor of the bacterial peptidoglycan cell wall, from UTP and MurNAc-alpha-1P. Is involved in peptidoglycan recycling as part of a cell wall recycling pathway that bypasses de novo biosynthesis of the peptidoglycan precursor UDP-MurNAc. Plays a role in intrinsic resistance to fosfomycin, which targets the de novo synthesis of UDP-MurNAc. Is not able to use GlcNAc-alpha-1P and GalNAc-alpha-1P as substrates. Cannot accept other nucleotide triphosphates (ATP, CTP, TTP, or GTP) than UTP. The chain is N-acetylmuramate alpha-1-phosphate uridylyltransferase from Pseudomonas putida (strain ATCC 47054 / DSM 6125 / CFBP 8728 / NCIMB 11950 / KT2440).